Here is a 248-residue protein sequence, read N- to C-terminus: Inner membrane protein pE248R (248 aa).

The N-myristoyl glycine; by host moiety is linked to residue Gly2. Over 2–199 (GGSTSKNSFK…ADAISAVFKN (198 aa)) the chain is Cytoplasmic. A helical membrane pass occupies residues 200–220 (IMVAAVVIVLIIVGFIAVFYF). The Extracellular segment spans residues 221-248 (LHSRHRHEEEEEAEPLISNKVLKNAAVS).

It belongs to the asfivirus E248R family. Interacts with A151R.

It localises to the host membrane. It is found in the virion membrane. In terms of biological role, essential for viral fusion with host endosomal membrane and core release. The sequence is that of Inner membrane protein pE248R from Ornithodoros (relapsing fever ticks).